The primary structure comprises 96 residues: Putative septation protein SpoVG (96 aa).

The protein belongs to the SpoVG family.

Functionally, could be involved in septation. The polypeptide is Putative septation protein SpoVG (Phytoplasma australiense).